The sequence spans 649 residues: UvrABC system protein B (649 aa).

One can recognise a Helicase ATP-binding domain in the interval 25–178; the sequence is EHYKDGIKEQ…EDILKELVKM (154 aa). 38 to 45 serves as a coordination point for ATP; that stretch reads GVTGSGKT. Positions 91 to 114 match the Beta-hairpin motif; the sequence is YYDYYQPEAYVAQTDTFIDKESAI. One can recognise a Helicase C-terminal domain in the interval 428 to 594; that stretch reads QVDDLLGEIR…SVVRKLKDKK (167 aa). The 36-residue stretch at 614-649 folds into the UVR domain; it reads DEIIKELEKEMKQAAKDLNFEKAAKLRDRIMELKEE.

This sequence belongs to the UvrB family. In terms of assembly, forms a heterotetramer with UvrA during the search for lesions. Interacts with UvrC in an incision complex.

It localises to the cytoplasm. In terms of biological role, the UvrABC repair system catalyzes the recognition and processing of DNA lesions. A damage recognition complex composed of 2 UvrA and 2 UvrB subunits scans DNA for abnormalities. Upon binding of the UvrA(2)B(2) complex to a putative damaged site, the DNA wraps around one UvrB monomer. DNA wrap is dependent on ATP binding by UvrB and probably causes local melting of the DNA helix, facilitating insertion of UvrB beta-hairpin between the DNA strands. Then UvrB probes one DNA strand for the presence of a lesion. If a lesion is found the UvrA subunits dissociate and the UvrB-DNA preincision complex is formed. This complex is subsequently bound by UvrC and the second UvrB is released. If no lesion is found, the DNA wraps around the other UvrB subunit that will check the other stand for damage. This is UvrABC system protein B from Methanosphaera stadtmanae (strain ATCC 43021 / DSM 3091 / JCM 11832 / MCB-3).